The primary structure comprises 490 residues: Cytochrome P450 2C26 (490 aa).

C435 is a heme binding site.

Belongs to the cytochrome P450 family. Heme is required as a cofactor.

The protein resides in the endoplasmic reticulum membrane. It localises to the microsome membrane. It catalyses the reaction an organic molecule + reduced [NADPH--hemoprotein reductase] + O2 = an alcohol + oxidized [NADPH--hemoprotein reductase] + H2O + H(+). In terms of biological role, catalyzes the hydroxylation of tolbutamide and the N-demethylation of aminopyrine and benzphetamine. The sequence is that of Cytochrome P450 2C26 (CYP2C26) from Mesocricetus auratus (Golden hamster).